The primary structure comprises 113 residues: MKNFALSCIKFYQNYISKILPKSCRYYPTCSEYAVWEFKNNDIFSALLATLARILRCNQLFKGGIDYPVIRKRFGSFSIFKRMEFSNIDFWFVPCKNSKFYVIKVLDSLKEKR.

It belongs to the UPF0161 family.

The protein localises to the cell inner membrane. Functionally, could be involved in insertion of integral membrane proteins into the membrane. The protein is Putative membrane protein insertion efficiency factor of Campylobacter curvus (strain 525.92).